Here is a 366-residue protein sequence, read N- to C-terminus: Hydroxyproline O-arabinosyltransferase 1 (366 aa).

A helical; Signal-anchor transmembrane segment spans residues 6–26 (TLFYPLLITLSVALITYNIII).

Ubiquitous.

Its subcellular location is the golgi apparatus. The protein resides in the cis-Golgi network membrane. The catalysed reaction is trans-4-hydroxy-L-prolyl-[protein] + UDP-beta-L-arabinofuranose = O-(beta-L-arabinofuranosyl)-trans-4-hydroxy-L-prolyl-[protein] + UDP + H(+). Glycosyltransferase involved in the O-arabinosylation of several proteins including extensins and small signaling peptides. Catalyzes the transfer of the initial L-arabinose to the hydroxyl group of Hyp residues. Contributes redundantly with HPAT2 and HPAT3 to arabinosylation of EXT3. In Arabidopsis thaliana (Mouse-ear cress), this protein is Hydroxyproline O-arabinosyltransferase 1.